The following is a 94-amino-acid chain: MLKPLGDRVVLKVEEEKEQTVGGFVLAGASKERTQVATVVAVGDGARTLTGELVAPSVAAGDKVIIENGVGIEVKDDDNTVTIVREADILAILA.

It belongs to the GroES chaperonin family. In terms of assembly, heptamer of 7 subunits arranged in a ring. Interacts with the chaperonin GroEL.

It is found in the cytoplasm. Its function is as follows. Together with the chaperonin GroEL, plays an essential role in assisting protein folding. The GroEL-GroES system forms a nano-cage that allows encapsulation of the non-native substrate proteins and provides a physical environment optimized to promote and accelerate protein folding. GroES binds to the apical surface of the GroEL ring, thereby capping the opening of the GroEL channel. This is Co-chaperonin GroES from Streptococcus equinus (Streptococcus bovis).